Reading from the N-terminus, the 1392-residue chain is Leucine-rich PPR motif-containing protein, mitochondrial (1392 aa).

The transit peptide at 1–59 (MAALLRPARWLLGAAAAPRLPLSLRLPAGVPGRLSSVVRVAAVGSRPAAGERLSQARLY) directs the protein to the mitochondrion. PPR repeat units follow at residues 125 to 159 (LLRSCGSLLPELSLAERTEFAHKIWDKLQQLGVVY), 160 to 194 (DVSHYNALLKVYLQNEYKFSPTDFLAKMEGANIQP), 195 to 229 (NRVTYQRLIAAYCNVGDIEGASKILGFMKTKDLPI), 230 to 264 (TEAVFSALVTGHARAGDMENAENILTVMKQAGIEP), 265 to 299 (GPDTYLALLNAHAERGDIGQVRQILEKVEKSDHYF), 300 to 334 (MDRDFLQVIFSFSKAGYPQYVSEILEKITYERRSI), 402 to 436 (HSSSLQFTLHCALQANRTALAKAVMEALREEGFPI), 437 to 471 (RPHYFWPLLAGHQKTKNVQGIIDILKIMNKVGVDP), 677 to 708 (VGSALKQLLLLLCSEENMQKALEVKAKYESDM), 709 to 745 (VIGGYAALINLCCRHDNAEDAWNLKQEVDRLDASAIL), 746 to 783 (DTAKYVALVKVLGKHSRLQDAINILKEMKEKDVVIKDA), 784 to 820 (TVLSFFHILNGAALRGEIETVKQLHEAIVTLGLAKPS), 821 to 856 (SNISFPLVTVHLEKGDLPAALEASIACHKKYKVLPR), and 953 to 987 (RDQMYYNLLKLYKISSDWQRADAAWTKMQEENIIP). N6-acetyllysine is present on residues Lys151, Lys186, and Lys225. Lys291 is modified (N6-acetyllysine). Lys462 carries the N6-acetyllysine modification. Position 749 is an N6-acetyllysine (Lys749). Residues 931-1050 (ASNQVEALEK…NCKLKKSKDA (120 aa)) form an RNA-binding region. Phosphoserine occurs at positions 1025, 1026, and 1028. PPR repeat units follow at residues 1030-1064 (GEDVTEKTLLSNCKLKKSKDAYNIFLKAEKQNVVF), 1065-1101 (SSETYSTLIGLLLSKDDFTQAMHVKDFAETHIKGFTL), 1102-1136 (NDAANSLLIIRQVRRDYLKGALATLRAALDLKQVP), 1137-1175 (SQIAVTRLIQALALKGDVESIEAIQRMVAGLDTIGLSKM), 1176-1210 (VFINNIALAQMKNNKLDAAIENIEHLLASENQAIE), and 1315-1349 (NDKVYSCSMKSYALDKDVASAKALYEYLTAKNLKL). Ser1137 bears the Phosphoserine mark.

In terms of assembly, component of mRNP complexes associated with HNRPA1. Component of the complex, at least composed of LRPPRC, BECN1 and BCL2; the interactions prevent BECN1 from forming an autophagy-inducing complex with PIK3C3. Interacts with CECR2, HEBP2, MAP1S and UXT. Interacts with PPARGC1A. Interacts with FOXO1. Interacts (via N-terminus) with EIF4E; the interaction promotes association of EIF4E with 4ESE-containing mRNAs. Interacts with exportin XPO1/CRM1; interacts both alone and in complex with EIF4E and 4ESE-containing mRNAs to form an EIF4E-dependent mRNA export complex. Interacts with importin IPO8; the interaction occurs when LRPPRC is in its RNA-free form and returns LRPPRC to the nucleus for further export rounds. Interacts with BECN1. As to expression, strongly expressed in heart, liver and kidney. Weakly expressed in brain, skeletal muscle and testes.

The protein localises to the mitochondrion. It is found in the nucleus. Its subcellular location is the nucleoplasm. The protein resides in the nucleus inner membrane. It localises to the nucleus outer membrane. Its function is as follows. May play a role in RNA metabolism in both nuclei and mitochondria. In the nucleus binds to HNRPA1-associated poly(A) mRNAs and is part of nmRNP complexes at late stages of mRNA maturation which are possibly associated with nuclear mRNA export. Positively modulates nuclear export of mRNAs containing the EIF4E sensitivity element (4ESE) by binding simultaneously to both EIF4E and the 4ESE and acting as a platform for assembly for the RNA export complex. Also binds to exportin XPO1/CRM1 to engage the nuclear pore and traffic the bound mRNAs to the cytoplasm. May bind mature mRNA in the nucleus outer membrane. In mitochondria binds to poly(A) mRNA. Plays a role in translation or stability of mitochondrially encoded cytochrome c oxidase (COX) subunits. May be involved in transcription regulation. Cooperates with PPARGC1A to regulate certain mitochondrially encoded genes and gluconeogenic genes and may regulate docking of PPARGC1A to transcription factors. Seems to be involved in the transcription regulation of the multidrug-related genes MDR1 and MVP. Part of a nuclear factor that binds to the invMED1 element of MDR1 and MVP gene promoters. Binds single-stranded DNA. Required for maintaining mitochondrial potential. Suppresses the initiation of basal levels of autophagy and mitophagy by sustaining BCL2 levels. This Mus musculus (Mouse) protein is Leucine-rich PPR motif-containing protein, mitochondrial (Lrpprc).